The following is a 176-amino-acid chain: Adenine phosphoribosyltransferase (176 aa).

This sequence belongs to the purine/pyrimidine phosphoribosyltransferase family. In terms of assembly, homodimer.

Its subcellular location is the cytoplasm. The enzyme catalyses AMP + diphosphate = 5-phospho-alpha-D-ribose 1-diphosphate + adenine. It functions in the pathway purine metabolism; AMP biosynthesis via salvage pathway; AMP from adenine: step 1/1. Its function is as follows. Catalyzes a salvage reaction resulting in the formation of AMP, that is energically less costly than de novo synthesis. This Thermobifida fusca (strain YX) protein is Adenine phosphoribosyltransferase.